Here is a 256-residue protein sequence, read N- to C-terminus: MAVGKNKRLSKGKKGLKKKTQDPFARKDWYGIKAPAPFNIRDVGKTLVNRSSGMKNANDALKGRIFEVSLADLQKDEDHAFRKIKLRVDEVQGKNCLTNFHGLDFTSDKLRSLVRKWQSLIEANVTVKTTDDYLLRLFAIAFTKRRPNQIKKTTYAASSQIRAIRRKMTEIIQREASTCTLQQLTNKLIPEVIGREIEKATQGIYPLQNVHIRKVKLLKQPKFDLGGLLALHGESTTDEQGQKVEREFKERVLEEV.

A compositionally biased stretch (basic residues) spans 1–18; sequence MAVGKNKRLSKGKKGLKK. Residues 1–22 are disordered; sequence MAVGKNKRLSKGKKGLKKKTQD. N-acetylalanine; partial is present on A2.

This sequence belongs to the eukaryotic ribosomal protein eS1 family. In terms of assembly, component of the small ribosomal subunit. Mature ribosomes consist of a small (40S) and a large (60S) subunit. The 40S subunit contains about 33 different proteins and 1 molecule of RNA (18S). The 60S subunit contains about 49 different proteins and 3 molecules of RNA (25S, 5.8S and 5S).

It is found in the cytoplasm. The chain is Small ribosomal subunit protein eS1 from Pyricularia oryzae (strain Y34) (Rice blast fungus).